The following is a 375-amino-acid chain: Dual-specificity RNA methyltransferase RlmN (375 aa).

Catalysis depends on glutamate 94, which acts as the Proton acceptor. Residues 100–339 (EEDRATLCVS…VTVRKTRGDD (240 aa)) form the Radical SAM core domain. An intrachain disulfide couples cysteine 107 to cysteine 344. [4Fe-4S] cluster is bound by residues cysteine 114, cysteine 118, and cysteine 121. S-adenosyl-L-methionine-binding positions include 168-169 (GE), serine 200, 222-224 (SLH), and asparagine 301. The active-site S-methylcysteine intermediate is cysteine 344.

It belongs to the radical SAM superfamily. RlmN family. [4Fe-4S] cluster serves as cofactor.

Its subcellular location is the cytoplasm. The enzyme catalyses adenosine(2503) in 23S rRNA + 2 reduced [2Fe-2S]-[ferredoxin] + 2 S-adenosyl-L-methionine = 2-methyladenosine(2503) in 23S rRNA + 5'-deoxyadenosine + L-methionine + 2 oxidized [2Fe-2S]-[ferredoxin] + S-adenosyl-L-homocysteine. It catalyses the reaction adenosine(37) in tRNA + 2 reduced [2Fe-2S]-[ferredoxin] + 2 S-adenosyl-L-methionine = 2-methyladenosine(37) in tRNA + 5'-deoxyadenosine + L-methionine + 2 oxidized [2Fe-2S]-[ferredoxin] + S-adenosyl-L-homocysteine. Specifically methylates position 2 of adenine 2503 in 23S rRNA and position 2 of adenine 37 in tRNAs. m2A2503 modification seems to play a crucial role in the proofreading step occurring at the peptidyl transferase center and thus would serve to optimize ribosomal fidelity. The protein is Dual-specificity RNA methyltransferase RlmN of Vibrio parahaemolyticus serotype O3:K6 (strain RIMD 2210633).